Consider the following 103-residue polypeptide: Small ribosomal subunit protein uS10 (103 aa).

It belongs to the universal ribosomal protein uS10 family. As to quaternary structure, part of the 30S ribosomal subunit.

In terms of biological role, involved in the binding of tRNA to the ribosomes. This is Small ribosomal subunit protein uS10 from Shewanella pealeana (strain ATCC 700345 / ANG-SQ1).